A 1042-amino-acid polypeptide reads, in one-letter code: Elongation factor 3 (1042 aa).

6 HEAT repeats span residues 9–46, 86–124, 167–204, 206–242, 243–280, and 289–327; these read KVLMDLIPKLKISMQETDKNEVIKNSEQHSSVSWDPDT, PYLVRLLPRVLKQVGLEKVAAVRTQASTVAEDIIKTMNP, YRLPELIPILSESMWDTRTDIKNQARKTMTSVCTLISN, DIDKFIPVLIDCIAQPEKVPETIHTLGATTFVQEVHA, STLSIMVPLLYRGLNERETTIKRKSAVIIDNMCKLVED, and PKLIPTLEHIKETIGDPECRSVVNRSLATLIRVGNVKEG. ABC transporter domains follow at residues 425–642 and 668–994; these read EEGE…YQDI and CRMR…EQEE. Residues asparagine 704, glutamate 923, asparagine 926, and histidine 952 each contribute to the ADP site. The tract at residues 1009-1042 is disordered; it reads KKAKKLTSSELRKKKKERMARRKKGEEVFSDEDD. The segment covering 1020–1031 has biased composition (basic residues); that stretch reads RKKKKERMARRK.

The protein belongs to the ABC transporter superfamily. ABCF family. EF3 subfamily. In terms of assembly, monomer.

The protein localises to the cytoplasm. The enzyme catalyses ATP + H2O = ADP + phosphate + H(+). The protein operates within protein biosynthesis; polypeptide chain elongation. Its function is as follows. Ribosome-dependent ATPase that functions in cytoplasmic translation elongation. Required for the ATP-dependent release of deacylated tRNA from the ribosomal E-site during protein biosynthesis. Stimulates the eEF1A-dependent binding of aminoacyl-tRNA to the ribosomal A-site, which has reduced affinity for tRNA as long as the E-site is occupied. Assists translation termination by stimulating the release of nascent protein from the ribosome by release factors. The polypeptide is Elongation factor 3 (TEF3) (Pneumocystis carinii).